Reading from the N-terminus, the 336-residue chain is Biotin synthase (336 aa).

The region spanning threonine 36–arginine 263 is the Radical SAM core domain. [4Fe-4S] cluster-binding residues include cysteine 51, cysteine 55, and cysteine 58. [2Fe-2S] cluster-binding residues include cysteine 95, cysteine 126, cysteine 186, and arginine 258.

The protein belongs to the radical SAM superfamily. Biotin synthase family. Homodimer. Requires [4Fe-4S] cluster as cofactor. It depends on [2Fe-2S] cluster as a cofactor.

It catalyses the reaction (4R,5S)-dethiobiotin + (sulfur carrier)-SH + 2 reduced [2Fe-2S]-[ferredoxin] + 2 S-adenosyl-L-methionine = (sulfur carrier)-H + biotin + 2 5'-deoxyadenosine + 2 L-methionine + 2 oxidized [2Fe-2S]-[ferredoxin]. It participates in cofactor biosynthesis; biotin biosynthesis; biotin from 7,8-diaminononanoate: step 2/2. In terms of biological role, catalyzes the conversion of dethiobiotin (DTB) to biotin by the insertion of a sulfur atom into dethiobiotin via a radical-based mechanism. The sequence is that of Biotin synthase from Gluconobacter oxydans (strain 621H) (Gluconobacter suboxydans).